The primary structure comprises 118 residues: Class I hydrophobin 1 (118 aa).

The N-terminal stretch at 1–20 is a signal peptide; it reads MFARLSTALLAFTLATAVVA. Disulfide bonds link Cys34–Cys97, Cys41–Cys91, Cys42–Cys77, and Cys98–Cys111. Residue Asn54 is glycosylated (N-linked (GlcNAc...) asparagine). Asn115 carries N-linked (GlcNAc...) asparagine glycosylation.

This sequence belongs to the fungal hydrophobin family. Self-assembles to form functional amyloid fibrils called rodlets. Self-assembly into fibrillar rodlets occurs spontaneously at hydrophobic:hydrophilic interfaces and the rodlets further associate laterally to form amphipathic monolayers.

Its subcellular location is the secreted. The protein localises to the cell wall. Functionally, aerial growth, conidiation, and dispersal of filamentous fungi in the environment rely upon a capability of their secreting small amphipathic proteins called hydrophobins (HPBs) with low sequence identity. Class I can self-assemble into an outermost layer of rodlet bundles on aerial cell surfaces, conferring cellular hydrophobicity that supports fungal growth, development and dispersal; whereas Class II form highly ordered films at water-air interfaces through intermolecular interactions but contribute nothing to the rodlet structure. The protein is Class I hydrophobin 1 of Coprinopsis cinerea (strain Okayama-7 / 130 / ATCC MYA-4618 / FGSC 9003) (Inky cap fungus).